We begin with the raw amino-acid sequence, 427 residues long: Tol-Pal system protein TolB (427 aa).

The first 23 residues, 1–23, serve as a signal peptide directing secretion; the sequence is MKLLKRLVSVFAIVLAVGSNAFA.

The protein belongs to the TolB family. In terms of assembly, the Tol-Pal system is composed of five core proteins: the inner membrane proteins TolA, TolQ and TolR, the periplasmic protein TolB and the outer membrane protein Pal. They form a network linking the inner and outer membranes and the peptidoglycan layer.

The protein resides in the periplasm. Functionally, part of the Tol-Pal system, which plays a role in outer membrane invagination during cell division and is important for maintaining outer membrane integrity. In Haemophilus influenzae (strain ATCC 51907 / DSM 11121 / KW20 / Rd), this protein is Tol-Pal system protein TolB.